A 296-amino-acid chain; its full sequence is Nucleotide-binding protein SPT_1506 (296 aa).

ATP is bound at residue 13 to 20 (GMSGAGKT). Residue 63–66 (DMRS) participates in GTP binding.

The protein belongs to the RapZ-like family.

In terms of biological role, displays ATPase and GTPase activities. This is Nucleotide-binding protein SPT_1506 from Streptococcus pneumoniae (strain Taiwan19F-14).